The following is a 361-amino-acid chain: Glutaminyl-peptide cyclotransferase (361 aa).

The signal sequence occupies residues 1–28 (MAGGRHRRVVGTLHLLLLVAALPWASRG). N49 carries N-linked (GlcNAc...) asparagine glycosylation. C139 and C164 form a disulfide bridge. D159 lines the Zn(2+) pocket. The active-site Proton acceptor is E201. E202 serves as a coordination point for Zn(2+). The Proton acceptor role is filled by D248. N-linked (GlcNAc...) asparagine glycosylation is present at N296. H330 serves as a coordination point for Zn(2+).

This sequence belongs to the glutaminyl-peptide cyclotransferase family.

Its subcellular location is the secreted. It carries out the reaction N-terminal L-glutaminyl-[peptide] = N-terminal 5-oxo-L-prolyl-[peptide] + NH4(+). Responsible for the biosynthesis of pyroglutamyl peptides. Has a bias against acidic and tryptophan residues adjacent to the N-terminal glutaminyl residue and a lack of importance of chain length after the second residue. Also catalyzes N-terminal pyroglutamate formation. In vitro, catalyzes pyroglutamate formation of N-terminally truncated form of APP amyloid-beta peptides [Glu-3]-amyloid-beta. May be involved in the N-terminal pyroglutamate formation of several amyloid-related plaque-forming peptides. In Homo sapiens (Human), this protein is Glutaminyl-peptide cyclotransferase (QPCT).